The sequence spans 329 residues: 4-hydroxythreonine-4-phosphate dehydrogenase (329 aa).

Substrate is bound by residues His-136 and Thr-137. His-166, His-211, and His-266 together coordinate a divalent metal cation. Substrate-binding residues include Lys-274, Asn-283, and Arg-292.

It belongs to the PdxA family. As to quaternary structure, homodimer. Zn(2+) serves as cofactor. The cofactor is Mg(2+). Requires Co(2+) as cofactor.

It is found in the cytoplasm. It carries out the reaction 4-(phosphooxy)-L-threonine + NAD(+) = 3-amino-2-oxopropyl phosphate + CO2 + NADH. It participates in cofactor biosynthesis; pyridoxine 5'-phosphate biosynthesis; pyridoxine 5'-phosphate from D-erythrose 4-phosphate: step 4/5. Functionally, catalyzes the NAD(P)-dependent oxidation of 4-(phosphooxy)-L-threonine (HTP) into 2-amino-3-oxo-4-(phosphooxy)butyric acid which spontaneously decarboxylates to form 3-amino-2-oxopropyl phosphate (AHAP). The sequence is that of 4-hydroxythreonine-4-phosphate dehydrogenase from Escherichia fergusonii (strain ATCC 35469 / DSM 13698 / CCUG 18766 / IAM 14443 / JCM 21226 / LMG 7866 / NBRC 102419 / NCTC 12128 / CDC 0568-73).